Reading from the N-terminus, the 223-residue chain is Large ribosomal subunit protein bL25 (223 aa).

The segment at 198-223 (EEIGDRPRSAEEGAAPVKERKLRESE) is disordered.

The protein belongs to the bacterial ribosomal protein bL25 family. CTC subfamily. As to quaternary structure, part of the 50S ribosomal subunit; part of the 5S rRNA/L5/L18/L25 subcomplex. Contacts the 5S rRNA. Binds to the 5S rRNA independently of L5 and L18.

This is one of the proteins that binds to the 5S RNA in the ribosome where it forms part of the central protuberance. This Thermomicrobium roseum (strain ATCC 27502 / DSM 5159 / P-2) protein is Large ribosomal subunit protein bL25.